A 427-amino-acid chain; its full sequence is Glutamate-1-semialdehyde 2,1-aminomutase (427 aa).

An N6-(pyridoxal phosphate)lysine modification is found at Lys265.

Belongs to the class-III pyridoxal-phosphate-dependent aminotransferase family. HemL subfamily. As to quaternary structure, homodimer. Pyridoxal 5'-phosphate is required as a cofactor.

Its subcellular location is the cytoplasm. The catalysed reaction is (S)-4-amino-5-oxopentanoate = 5-aminolevulinate. Its pathway is porphyrin-containing compound metabolism; protoporphyrin-IX biosynthesis; 5-aminolevulinate from L-glutamyl-tRNA(Glu): step 2/2. In Pseudomonas putida (strain ATCC 47054 / DSM 6125 / CFBP 8728 / NCIMB 11950 / KT2440), this protein is Glutamate-1-semialdehyde 2,1-aminomutase.